A 72-amino-acid polypeptide reads, in one-letter code: Defensin 3 (72 aa).

An N-terminal signal peptide occupies residues 1–25; sequence MEKKMAGFCIFFLVLFLAQEYGVEG. Intrachain disulfides connect C28/C72, C39/C60, and C45/C66.

This sequence belongs to the DEFL family. As to quaternary structure, may form dimers. In terms of processing, not glycosylated. Has 4 disulfide bonds.

In terms of biological role, probably has antifungal activity. This is Defensin 3 from Arachis hypogaea (Peanut).